Here is a 251-residue protein sequence, read N- to C-terminus: 2,3-bisphosphoglycerate-dependent phosphoglycerate mutase (251 aa).

Substrate-binding positions include 13–20 (RHGESEWN), 26–27 (TG), Arg-65, 92–95 (ERHY), Lys-103, 119–120 (RR), and 186–187 (GN). Residue His-14 is the Tele-phosphohistidine intermediate of the active site. The active-site Proton donor/acceptor is Glu-92.

This sequence belongs to the phosphoglycerate mutase family. BPG-dependent PGAM subfamily.

It carries out the reaction (2R)-2-phosphoglycerate = (2R)-3-phosphoglycerate. It functions in the pathway carbohydrate degradation; glycolysis; pyruvate from D-glyceraldehyde 3-phosphate: step 3/5. Catalyzes the interconversion of 2-phosphoglycerate and 3-phosphoglycerate. This chain is 2,3-bisphosphoglycerate-dependent phosphoglycerate mutase, found in Rhodococcus jostii (strain RHA1).